A 327-amino-acid chain; its full sequence is Probable cell division protein WhiA (327 aa).

The segment at residues 275-308 (SLEELGRLADPQMTKDAVAGRIRRLLTMADKRAE) is a DNA-binding region (H-T-H motif).

It belongs to the WhiA family.

Functionally, involved in cell division and chromosome segregation. In Corynebacterium glutamicum (strain ATCC 13032 / DSM 20300 / JCM 1318 / BCRC 11384 / CCUG 27702 / LMG 3730 / NBRC 12168 / NCIMB 10025 / NRRL B-2784 / 534), this protein is Probable cell division protein WhiA.